A 360-amino-acid chain; its full sequence is Peptide chain release factor 1 (360 aa).

At Q235 the chain carries N5-methylglutamine. Residues 285 to 295 (RQAAEQADTRR) show a composition bias toward basic and acidic residues. The segment at 285–309 (RQAAEQADTRRNLLGSGDRSDKIRT) is disordered.

The protein belongs to the prokaryotic/mitochondrial release factor family. Post-translationally, methylated by PrmC. Methylation increases the termination efficiency of RF1.

It localises to the cytoplasm. Functionally, peptide chain release factor 1 directs the termination of translation in response to the peptide chain termination codons UAG and UAA. The sequence is that of Peptide chain release factor 1 from Actinobacillus pleuropneumoniae serotype 7 (strain AP76).